A 1089-amino-acid chain; its full sequence is WD repeat-containing protein on Y chromosome (1089 aa).

WD repeat units lie at residues 155–199 (EEVA…IRTA), 207–249 (PHAV…RGPF), 329–368 (RIPL…EPSA), 372–411 (GHNG…LLQT), 462–501 (THAA…RKII), 514–553 (TIDI…VIRN), and 601–641 (FHTD…RRYS). The disordered stretch occupies residues 661–684 (KRSKRWASRAPHSGSHMMSHTGSH). Low complexity predominate over residues 672–684 (HSGSHMMSHTGSH). WD repeat units lie at residues 767–806 (KTGD…IPEA) and 850–889 (GHLK…LGTL). The disordered stretch occupies residues 1049–1089 (LNIKLPSRRRSDRTNDPRNMRTAKTRGDMGLGHRSSHTSQN).

This Drosophila willistoni (Fruit fly) protein is WD repeat-containing protein on Y chromosome.